The chain runs to 472 residues: Squamosa promoter-binding-like protein 18 (472 aa).

Positions 89–110 are disordered; sequence AKVPPSTSTLKRPRGGGGGGGG. An SBP-type zinc finger spans residues 112–189; it reads CPSCAVDGCK…DGHNRRRRKP (78 aa). Zn(2+) contacts are provided by Cys115, Cys120, Cys137, His140, Cys156, Cys159, His163, and Cys175. Residues 172-188 carry the Bipartite nuclear localization signal motif; it reads KRSCRKRLDGHNRRRRK. Disordered regions lie at residues 179–218, 233–261, and 358–381; these read LDGHNRRRRKPQADSMSSGSFMTSQQGTRFASFTPPRPEP, SHHHHPHPVMTSRQPHFVGSPSSATTAAF, and SVDVSRMVQPSPAAAAGAEHHHHH. Residues 192-209 are compositionally biased toward polar residues; it reads DSMSSGSFMTSQQGTRFA. The span at 252–261 shows a compositional bias: low complexity; it reads SPSSATTAAF.

In terms of tissue distribution, expressed in young panicles.

Its subcellular location is the nucleus. Its function is as follows. Trans-acting factor that binds specifically to the consensus nucleotide sequence 5'-TNCGTACAA-3'. May be involved in panicle development. The chain is Squamosa promoter-binding-like protein 18 (SPL18) from Oryza sativa subsp. japonica (Rice).